The following is an 861-amino-acid chain: Methyltransferase/ribosomally synthesized type III borosin cyclic peptide precursor aboMAa (861 aa).

Residues Met1 to Lys279 are methyltransferase domain. Active-site residues include Arg100, Tyr104, and Tyr126. Residues Tyr126, His128, Val131, Ala158, Gln200, Ala241, Ser272, and Thr273 each contribute to the S-adenosyl-L-methionine site. The segment at Ala280–Ser408 is clasp domain. The tract at residues Pro409–Pro799 is type III-specific C-terminal domain. Disordered regions lie at residues Asn575–Gly596 and Glu772–Ala801. Gly residues predominate over residues Pro579–Ser593. The span at Glu772 to Glu783 shows a compositional bias: basic and acidic residues. The segment covering Lys784–Pro797 has biased composition (acidic residues). N-methylvaline occurs at positions 805 and 807. 9 consecutive repeat copies span residues Val805 to Asp809, Val810 to Asp814, Val815 to Asp819, Val820 to Asp824, Val825 to Asp829, Val830 to Asp834, Val835 to Asp839, Val840 to Asp844, and Val845 to Asp849. The 10 X 5 AA tandem repeats of VDVTD stretch occupies residues Val805–Asp854. Thr808 carries the N-methylthreonine modification. N-methylvaline is present on residues Val810 and Val812. Thr813 is modified (N-methylthreonine). Residues Val815 and Val817 each carry the N-methylvaline modification. N-methylthreonine is present on Thr818. An N-methylvaline mark is found at Val820 and Val822. Residue Thr823 is modified to N-methylthreonine. Val825 and Val827 each carry N-methylvaline. Thr828 bears the N-methylthreonine mark. Val830 and Val832 each carry N-methylvaline. An N-methylthreonine modification is found at Thr833. The stretch at Val850–Asp854 is one 10; approximate repeat.

The protein in the N-terminal section; belongs to the precorrin methyltransferase family. Post-translationally, aboMA automethylates at Val-805, Val-807, Thr-808, Val-810, Val-812, Thr-813, Val-815, Val-817, Thr-818, Val-820, Val-822, Thr-823, Val-825, Val-827 and Thr-828, Val-830, Val-832 and T-833 before being processed by a prolyloligopeptidase which likely forms a peptidyl ester upon removal of the follower propeptide, which then undergoes macrocyclization with the N-terminus of the modified core peptide. Peptide backbone alpha-N-methylations change the physicochemical properties of amide bonds to provide structural constraints and other favorable characteristics including biological membrane permeability to peptides.

The protein operates within secondary metabolite biosynthesis. Functionally, fusion protein of the methyltransferase aboM and a type III borosin core peptide; part of the gene cluster that mediates the biosynthesis of a type III borosin, a highly methylated cyclic peptide with potent biological activities. Type III borosins derive from the C-terminus of the fusion protein, and it is the same protein that methylates its own C-terminus using S-adenosyl methionine (SAM). The C-terminus is subsequently cleaved off and macrocyclized by a prolyloligopeptidase to give the final product. The sequence is that of Methyltransferase/ribosomally synthesized type III borosin cyclic peptide precursor aboMAa from Anomoporia bombycina (Polyporus bombycinus).